The sequence spans 419 residues: UDP-N-acetylglucosamine 1-carboxyvinyltransferase 2 (419 aa).

Residue 24-25 coordinates phosphoenolpyruvate; it reads KN. Residue Arg94 coordinates UDP-N-acetyl-alpha-D-glucosamine. Catalysis depends on Cys118, which acts as the Proton donor. A 2-(S-cysteinyl)pyruvic acid O-phosphothioketal modification is found at Cys118. Residues 123–127, Asp307, and Ile329 contribute to the UDP-N-acetyl-alpha-D-glucosamine site; that span reads RPIDQ.

This sequence belongs to the EPSP synthase family. MurA subfamily.

The protein resides in the cytoplasm. It carries out the reaction phosphoenolpyruvate + UDP-N-acetyl-alpha-D-glucosamine = UDP-N-acetyl-3-O-(1-carboxyvinyl)-alpha-D-glucosamine + phosphate. It functions in the pathway cell wall biogenesis; peptidoglycan biosynthesis. Functionally, cell wall formation. Adds enolpyruvyl to UDP-N-acetylglucosamine. The polypeptide is UDP-N-acetylglucosamine 1-carboxyvinyltransferase 2 (Staphylococcus aureus (strain bovine RF122 / ET3-1)).